A 176-amino-acid polypeptide reads, in one-letter code: MNLRQQLGSGLSMAMVLASAFAFWKLFSIVTMSNSPIVVVLSGSMEPAFQRGDVLFLWNREEYVGVGDVVVYKLQEKDIPIVHRVVREHRVMEKDRKTKKKVQKQLLLTKGDNNERDDLPLYAYGQQYLERKKDILGRVFGYVPLVGYVTILITENVYFKYALMALLGLSALVQDE.

The Cytoplasmic portion of the chain corresponds to 1–9 (MNLRQQLGS). A helical; Signal-anchor for type II membrane protein transmembrane segment spans residues 10–30 (GLSMAMVLASAFAFWKLFSIV). The Lumenal segment spans residues 31 to 176 (TMSNSPIVVV…LGLSALVQDE (146 aa)). Active-site charge relay system residues include serine 44, histidine 83, and aspartate 118. The interval 162–173 (ALMALLGLSALV) is C-terminal short (CTS) helix.

It belongs to the peptidase S26B family. As to quaternary structure, component of the signal peptidase complex (SPC) composed of a catalytic subunit SEC11 and three accessory subunits SPC1, SPC2 and SPC3. The complex induces a local thinning of the ER membrane which is used to measure the length of the signal peptide (SP) h-region of protein substrates. This ensures the selectivity of the complex towards h-regions shorter than 18-20 amino acids. SPC associates with the translocon complex.

It is found in the endoplasmic reticulum membrane. The catalysed reaction is Cleavage of hydrophobic, N-terminal signal or leader sequences from secreted and periplasmic proteins.. Functionally, catalytic component of the signal peptidase complex (SPC) which catalyzes the cleavage of N-terminal signal sequences from nascent proteins as they are translocated into the lumen of the endoplasmic reticulum. Specifically cleaves N-terminal signal peptides that contain a hydrophobic alpha-helix (h-region) shorter than 18-20 amino acids. The chain is Signal peptidase complex catalytic subunit SEC11 (SEC11) from Ogataea parapolymorpha (strain ATCC 26012 / BCRC 20466 / JCM 22074 / NRRL Y-7560 / DL-1) (Yeast).